A 154-amino-acid polypeptide reads, in one-letter code: MYPAHLLVLLAVCVSLLGASAISPRPLNLIQFSQLIQCANKGKRATYHYMDYGCYCSKGGSGTPVDALDRCCKTHDDCYGQAEKKGCFPLLSLYNFACFPGAPQCGKGNTCQRFVCACDLKAALCFAKSPYNNNYNIDIKKKCQTLIYMRLQTQ.

The signal sequence occupies residues 1 to 21 (MYPAHLLVLLAVCVSLLGASA). Positions 22–27 (ISPRPL) are excised as a propeptide. Disulfide bonds link Cys-38–Cys-98, Cys-54–Cys-143, Cys-56–Cys-72, Cys-71–Cys-125, Cys-78–Cys-118, Cys-87–Cys-111, and Cys-105–Cys-116. Positions 55, 57, and 59 each coordinate Ca(2+). Residue His-75 is part of the active site. Asp-76 is a binding site for Ca(2+). Asp-119 is a catalytic residue.

This sequence belongs to the phospholipase A2 family. Group I subfamily. D49 sub-subfamily. Requires Ca(2+) as cofactor. Expressed by the venom gland.

It localises to the secreted. The enzyme catalyses a 1,2-diacyl-sn-glycero-3-phosphocholine + H2O = a 1-acyl-sn-glycero-3-phosphocholine + a fatty acid + H(+). In terms of biological role, snake venom phospholipase A2 (PLA2) that inhibits neuromuscular transmission by blocking acetylcholine release from the nerve termini. PLA2 catalyzes the calcium-dependent hydrolysis of the 2-acyl groups in 3-sn-phosphoglycerides. The chain is Basic phospholipase A2 PC20 from Laticauda colubrina (Yellow-lipped sea krait).